The primary structure comprises 551 residues: Colicin-E6 (551 aa).

Disordered stretches follow at residues 1–74, 244–269, 293–317, 406–501, and 517–551; these read MSGG…SGGG, LSPG…NTRD, PDQV…HPVE, NKQA…WYGD, and EGYR…KKYL. Over residues 20-35 the composition is skewed to gly residues; sequence INGGPTGLGVGGGASD. Positions 36–45 are enriched in low complexity; sequence GSGWSSENNP. A compositionally biased stretch (gly residues) spans 46–74; it reads WGGGSGSGIHWGGGSGHGNGGGNGNSGGG. 2 stretches are compositionally biased toward basic and acidic residues: residues 296-317 and 430-484; these read VKQR…HPVE and ESRK…EGKP. A ribosome inactivating activity region spans residues 455 to 551; the sequence is KGVKDYGHDY…DPKRNIKKYL (97 aa). The tract at residues 530-551 is binding of immunity protein; that stretch reads FEPKTGNQLKGPDPKRNIKKYL.

This sequence belongs to the cloacin colicin family.

Inactivates ribosomes by hydrolyzing 16S RNA in 30S ribosomes at a specific site. In terms of biological role, colicins are polypeptide toxins produced by and active against E.coli and closely related bacteria. The sequence is that of Colicin-E6 from Escherichia coli.